Consider the following 592-residue polypeptide: Aspartate--tRNA ligase (592 aa).

Glu-173 provides a ligand contact to L-aspartate. An aspartate region spans residues 197-200 (QLFK). L-aspartate is bound at residue Arg-219. ATP contacts are provided by residues 219–221 (RDE) and Gln-228. Residue His-448 participates in L-aspartate binding. Residue Glu-482 participates in ATP binding. Arg-489 lines the L-aspartate pocket. 534–537 (GLDR) is an ATP binding site.

Belongs to the class-II aminoacyl-tRNA synthetase family. Type 1 subfamily. As to quaternary structure, homodimer.

The protein localises to the cytoplasm. It catalyses the reaction tRNA(Asp) + L-aspartate + ATP = L-aspartyl-tRNA(Asp) + AMP + diphosphate. Functionally, catalyzes the attachment of L-aspartate to tRNA(Asp) in a two-step reaction: L-aspartate is first activated by ATP to form Asp-AMP and then transferred to the acceptor end of tRNA(Asp). The protein is Aspartate--tRNA ligase of Shewanella putrefaciens (strain CN-32 / ATCC BAA-453).